Reading from the N-terminus, the 372-residue chain is MTATPTASLPPLANDRFLRACLRLPTDVTPVWLMRQAGRYLSEYRDTRAKAGSFMGLATNPQYATEVTLQPLDRYPLDAAILFSDILTVPDAMGLGLSFAQGEGPRFAHPLRDEADVAKLQVPDMEKLRYVFDAVASIRRALAPAGAPGRVPLIGFSGSPWTLACYMVEGAGSDDYRLVKTLLYRRPDLMHRILEVNADAVAAYLNAQIEAGAQAVMIFDSWGGVLADGAFQRFSLAYTERVLRQLKKEQGGYRVPQIVFTKGGGLWLEAIADSGCDVVGLDWTMNLGAARARVGDRVALQGNLDPNVLFADPEQIRAEVARTLDSYGAPSAGSGHVFNLGHGISQHTPPDSVSVLVDAVHSYSRQQRGAAG.

Substrate contacts are provided by residues Arg35–Arg39, Asp85, Tyr166, Ser221, and His342.

Belongs to the uroporphyrinogen decarboxylase family. As to quaternary structure, homodimer.

It is found in the cytoplasm. It carries out the reaction uroporphyrinogen III + 4 H(+) = coproporphyrinogen III + 4 CO2. It participates in porphyrin-containing compound metabolism; protoporphyrin-IX biosynthesis; coproporphyrinogen-III from 5-aminolevulinate: step 4/4. Catalyzes the decarboxylation of four acetate groups of uroporphyrinogen-III to yield coproporphyrinogen-III. This is Uroporphyrinogen decarboxylase from Methylibium petroleiphilum (strain ATCC BAA-1232 / LMG 22953 / PM1).